We begin with the raw amino-acid sequence, 100 residues long: Aspartyl/glutamyl-tRNA(Asn/Gln) amidotransferase subunit C (100 aa).

The protein belongs to the GatC family. Heterotrimer of A, B and C subunits.

It carries out the reaction L-glutamyl-tRNA(Gln) + L-glutamine + ATP + H2O = L-glutaminyl-tRNA(Gln) + L-glutamate + ADP + phosphate + H(+). It catalyses the reaction L-aspartyl-tRNA(Asn) + L-glutamine + ATP + H2O = L-asparaginyl-tRNA(Asn) + L-glutamate + ADP + phosphate + 2 H(+). Allows the formation of correctly charged Asn-tRNA(Asn) or Gln-tRNA(Gln) through the transamidation of misacylated Asp-tRNA(Asn) or Glu-tRNA(Gln) in organisms which lack either or both of asparaginyl-tRNA or glutaminyl-tRNA synthetases. The reaction takes place in the presence of glutamine and ATP through an activated phospho-Asp-tRNA(Asn) or phospho-Glu-tRNA(Gln). The polypeptide is Aspartyl/glutamyl-tRNA(Asn/Gln) amidotransferase subunit C (Rickettsia typhi (strain ATCC VR-144 / Wilmington)).